Consider the following 81-residue polypeptide: Probable antitoxin MazE2 (81 aa).

Forms a complex with cognate toxin MazF2.

Antitoxin component of a type II toxin-antitoxin (TA) system. This chain is Probable antitoxin MazE2 (mazE2), found in Mycobacterium tuberculosis (strain ATCC 25618 / H37Rv).